The primary structure comprises 159 residues: Pathogenesis-related leaf protein 6 (159 aa).

The N-terminal stretch at 1 to 24 (MGLFNISLLLTCLMVLAIFHSCEA) is a signal peptide. Gln-25 carries the pyrrolidone carboxylic acid modification. In terms of domain architecture, SCP spans 32-147 (LAVHNDARAQ…NGWWFISCNY (116 aa)). 3 cysteine pairs are disulfide-bonded: Cys-68–Cys-136, Cys-109–Cys-115, and Cys-131–Cys-145.

Belongs to the CRISP family.

Probably involved in the defense reaction of plants against pathogens. Has antifungal activity. This is Pathogenesis-related leaf protein 6 (PR1B1) from Solanum lycopersicum (Tomato).